The following is a 77-amino-acid chain: MTKNTALTIFMVVLVIEMVMEETQGDTCHEYLYPEKCENNQCNSECATKFKEVGVFGFCVPPRSEPTEQFCICSYNC.

Residues 1 to 25 (MTKNTALTIFMVVLVIEMVMEETQG) form the signal peptide. Intrachain disulfides connect C28/C77, C37/C59, C42/C71, and C46/C73.

This sequence belongs to the DEFL family.

It is found in the secreted. This chain is Putative defensin-like protein 129 (LCR13), found in Arabidopsis thaliana (Mouse-ear cress).